We begin with the raw amino-acid sequence, 116 residues long: Large ribosomal subunit protein bL19 (116 aa).

Belongs to the bacterial ribosomal protein bL19 family.

In terms of biological role, this protein is located at the 30S-50S ribosomal subunit interface and may play a role in the structure and function of the aminoacyl-tRNA binding site. The sequence is that of Large ribosomal subunit protein bL19 from Mannheimia succiniciproducens (strain KCTC 0769BP / MBEL55E).